Reading from the N-terminus, the 827-residue chain is Multiple RNA-binding domain-containing protein 1 (827 aa).

An RRM 1 domain is found at 5-78; the sequence is SRIFVKNLPP…SRISVDIAKP (74 aa). 3 disordered regions span residues 77–116, 176–230, and 256–299; these read KPIA…TAAA, AGLE…ATDD, and AASG…DPES. A compositionally biased stretch (acidic residues) spans 179-189; the sequence is EDGESDDEYED. Low complexity-rich tracts occupy residues 208 to 225 and 256 to 270; these read APLA…PVSL and AASG…STSV. Basic and acidic residues predominate over residues 277-288; sequence KPEEHPAEDSRE. 4 consecutive RRM domains span residues 308–384, 489–560, 599–682, and 704–781; these read SRLF…PAAA, TTIL…KGPK, SSLF…ASHR, and TKLV…FAQA.

The protein belongs to the RRM MRD1 family.

It localises to the nucleus. Involved in pre-rRNA processing. The polypeptide is Multiple RNA-binding domain-containing protein 1 (mrd-1) (Neurospora crassa (strain ATCC 24698 / 74-OR23-1A / CBS 708.71 / DSM 1257 / FGSC 987)).